The primary structure comprises 143 residues: FAM161 homolog famh-136 (143 aa).

This sequence belongs to the FAM136 family.

It is found in the cytoplasm. In terms of biological role, may play a role in locomotion and behavior. The chain is FAM161 homolog famh-136 from Caenorhabditis elegans.